A 597-amino-acid polypeptide reads, in one-letter code: Centrosomal protein of 70 kDa (597 aa).

Residues 1-23 (MFPVAPKPQDSSQASDRLMTEKQ) are disordered. Coiled-coil stretches lie at residues 66–179 (MRQN…QMEV) and 254–326 (TYKG…KKAE). The TPR repeat unit spans residues 483–516 (NGVYPRMNEVYTRLGEMNNAVRNLQELLELDSSS).

In terms of assembly, directly interacts with tubulin-gamma; this interaction determines centrosomal localization.

It localises to the cytoplasm. It is found in the cytoskeleton. Its subcellular location is the microtubule organizing center. The protein localises to the centrosome. In terms of biological role, plays a role in the organization of both preexisting and nascent microtubules in interphase cells. During mitosis, required for the organization and orientation of the mitotic spindle. This Pongo abelii (Sumatran orangutan) protein is Centrosomal protein of 70 kDa (CEP70).